Here is a 410-residue protein sequence, read N- to C-terminus: Indoleamine 2,3-dioxygenase nanC (410 aa).

Residue histidine 309 coordinates heme.

Belongs to the indoleamine 2,3-dioxygenase family. The cofactor is heme.

It catalyses the reaction D-tryptophan + O2 = N-formyl-D-kynurenine. It carries out the reaction L-tryptophan + O2 = N-formyl-L-kynurenine. Its pathway is secondary metabolite biosynthesis. In terms of biological role, indoleamine 2,3-dioxygenase; part of the gene cluster that mediates the biosynthesis of the benzazepine alkaloid nanangelenin A which contains an unprecedented 3,4-dihydro-1-benzazepine-2,5-dione-N-prenyl-N-acetoxy-anthranilamide scaffold. The first step of nanangelenin biosynthesis is catalyzed by the indoleamine 2,3-dioxygenase nanC which produces N-formyl-kynurenine through the catabolism of tryptophan. The two-module NRPS nanA then utilizes anthranilate (Ant) and L-kynurenine (L-Kyn) to assemble the dipeptide product nanangelenin B. The first adenylation domain of nanA (A1) loads anthranilate onto the T1 domain, while A2 loads kynurenine, generated through spontaneous nonenzymatic deformylation of the nanC-supplied N-formyl-kynurenine. The peptide bond formation between the tethered amino acids is catalyzed by the first condensation domain (C1) between anthranilate's carbonyl carbon and kynurenine's aliphatic primary amine. The second C domain (C2) catalyzes the final cyclization event between the aromatic amine of kynurenine and the tethered carbonyl carbon, yielding nanangelenin B. The terminal T3 domain enhances the catalytic efficiency of C2, suggesting the T2-tethered Ant-L-Kyn is transferred to T3 prior to cyclization by C2. Once released from nanA, nanangelenin B is then prenylated by the prenyltransferase nanD to form nanangelenin C. Nanangelenin C is then N-hydroxylated by the FAD-dependent monooxygenase nanF and further acetylated by the acetyltransferase nanB to yield nanangelenin F. Finally, the N-methyltransferase nanE methylates the amide nitrogen of 1-benzazepine to convert nanangelenin F into nanangelenin A. NanE is also able to methylate most of the intermediates of the pathway such as nanangelenin B and nanangelenin C to produce nanangelenin D and nanangelenin E, respectively. In Aspergillus nanangensis, this protein is Indoleamine 2,3-dioxygenase nanC.